Reading from the N-terminus, the 846-residue chain is cGMP-dependent protein kinase (846 aa).

Residues 1–22 form an autoinhibitory segment region; it reads MRCNERNKKKAIFSNDDFSGED. CNMP-binding domain stretches follow at residues 51 to 166, 169 to 268, 288 to 391, and 411 to 510; these read VCST…FIDS, VFDM…IVLG, IFRQ…LGDN, and IFRY…LQII. 6 residues coordinate 3',5'-cyclic GMP: lysine 106, glycine 115, glutamate 116, alanine 118, arginine 125, and serine 126. Residues arginine 466, glycine 475, glutamate 476, alanine 478, arginine 485, and threonine 486 each coordinate 3',5'-cyclic GMP. Residues 534 to 791 form the Protein kinase domain; that stretch reads LETERIIGRG…FKDIKEHAFF (258 aa). Residues 540-548 and lysine 563 contribute to the ATP site; that span reads IGRGTFGTV. The Proton acceptor role is filled by aspartate 657. The region spanning 792 to 846 is the AGC-kinase C-terminal domain; that stretch reads GNFNWDKLAGRLLEPPLVSKGETYAEDIDIKQIEEEDALNEGEPLDGDDSWDVDF. Residues 824–846 are disordered; it reads IEEEDALNEGEPLDGDDSWDVDF. A compositionally biased stretch (acidic residues) spans 825–846; that stretch reads EEEDALNEGEPLDGDDSWDVDF.

Belongs to the protein kinase superfamily. AGC Ser/Thr protein kinase family. cGMP subfamily. As to quaternary structure, monomer. Requires Mg(2+) as cofactor. Autophosphorylated.

Its subcellular location is the cytoplasm. It localises to the endoplasmic reticulum membrane. It carries out the reaction L-seryl-[protein] + ATP = O-phospho-L-seryl-[protein] + ADP + H(+). It catalyses the reaction L-threonyl-[protein] + ATP = O-phospho-L-threonyl-[protein] + ADP + H(+). Its activity is regulated as follows. Activated by cGMP. Not activated by cAMP. cGMP binding allosterically triggers a conformational change at the alpha C-helix of cGMP-binding domain 4, which bridges the regulatory and catalytic domains, causing the capping triad, composed of Arg-477, Gln-525 and Asp-526, to form and stabilize the active conformation. The cGMP-binding domains acts cooperatively to activate PKG. Its function is as follows. Serine/threonine protein kinase which acts as a downstream effector of the second messenger cGMP. Controls the release of Ca(2+) from intracellular stores by regulating phosphoinositide biosynthesis. Ca(2+) signals are essential for merozoite and sporozoite invasion and egress from host hepatocytes and erythrocytes, and, in the mosquito vector, for gametocyte activation, and ookinete and sporozoite motility. During the host liver stage, regulates the initial invasion of host hepatocytes by sporozoites by regulating sporozoite motility and microneme exocytosis. Following parasite development in the hepatocytes, required for the release of merosomes, a vesicle containing the mature merozoites. During the asexual blood stage, required for the progression from schizont to the ring stage following merozoite invasion of host erythrocytes and for merozoite egress. Regulates merozoite egress by promoting the release of exonemes and micronemes which contain proteins essential for egress. Phosphorylates CDPK1 predominantly at the late schizont stage; phosphorylation at 'Ser-64' regulates CDPK1 protein-protein interaction and phosphorylation at 'Thr-231' may regulate CDPK1 kinase activity. In the mosquito vector, required for the initiation of gametogenesis induced by xanthurenic acid, specifically the gametocyte differentiation from the crescent-shaped form to the spherical form. Required for the gliding motility of ookinetes to reach and penetrate the midgut epithelium by promoting Ca(2+)-mediated activation of CDPK1 and CDPK4. Also required for microneme secretion in ookinete by promoting Ca(2+)-mediated activation of CDPK3. This is cGMP-dependent protein kinase from Plasmodium vivax (strain Salvador I).